Reading from the N-terminus, the 291-residue chain is Protease HtpX homolog (291 aa).

Helical transmembrane passes span 4 to 24 (IALF…VASL) and 38 to 58 (LGAL…ISLL). Zn(2+) is bound at residue His-144. Residue Glu-145 is part of the active site. Zn(2+) is bound at residue His-148. Transmembrane regions (helical) follow at residues 159–179 (LIQG…GYAV) and 199–219 (VTTI…VAWF). Glu-224 is a binding site for Zn(2+).

Belongs to the peptidase M48B family. Zn(2+) serves as cofactor.

It is found in the cell inner membrane. The sequence is that of Protease HtpX homolog from Paracidovorax citrulli (strain AAC00-1) (Acidovorax citrulli).